The chain runs to 383 residues: Lipid-A-disaccharide synthase (383 aa).

This sequence belongs to the LpxB family.

The enzyme catalyses 2-N,3-O-bis[(3R)-3-hydroxytetradecanoyl]-alpha-D-glucosaminyl 1-phosphate + UDP-2-N,3-O-bis[(3R)-3-hydroxytetradecanoyl]-alpha-D-glucosamine = lipid A disaccharide (E. coli) + UDP + H(+). The catalysed reaction is a lipid X + a UDP-2-N,3-O-bis[(3R)-3-hydroxyacyl]-alpha-D-glucosamine = a lipid A disaccharide + UDP + H(+). It participates in glycolipid biosynthesis; lipid IV(A) biosynthesis; lipid IV(A) from (3R)-3-hydroxytetradecanoyl-[acyl-carrier-protein] and UDP-N-acetyl-alpha-D-glucosamine: step 5/6. In terms of biological role, condensation of UDP-2,3-diacylglucosamine and 2,3-diacylglucosamine-1-phosphate to form lipid A disaccharide, a precursor of lipid A, a phosphorylated glycolipid that anchors the lipopolysaccharide to the outer membrane of the cell. In Klebsiella pneumoniae (strain 342), this protein is Lipid-A-disaccharide synthase.